The sequence spans 250 residues: Proteasome subunit alpha type-7-A (250 aa).

A Glycyl lysine isopeptide (Lys-Gly) (interchain with G-Cter in ubiquitin) cross-link involves residue K62.

Belongs to the peptidase T1A family. In terms of assembly, component of the 20S core complex of the 26S proteasome. The 26S proteasome is composed of a core protease (CP), known as the 20S proteasome, capped at one or both ends by the 19S regulatory particle (RP/PA700). The 20S proteasome core is composed of 28 subunits that are arranged in four stacked rings, resulting in a barrel-shaped structure. The two end rings are each formed by seven alpha subunits, and the two central rings are each formed by seven beta subunits. The catalytic chamber with the active sites is on the inside of the barrel. Interacts with KIN10 and KIN11 SnRK subunits, and with the SKP1A/ASK1 subunit of the SCF E3 ubiquitin ligase complex. Expressed in roots, leaves and flowers.

It localises to the cytoplasm. The protein localises to the nucleus. Its function is as follows. The proteasome is a multicatalytic proteinase complex which is characterized by its ability to cleave peptides with Arg, Phe, Tyr, Leu, and Glu adjacent to the leaving group at neutral or slightly basic pH. The proteasome has an ATP-dependent proteolytic activity. Mediates the association of the SCF(TIR1) E3 ubiquitin ligase complex with the proteasome. The sequence is that of Proteasome subunit alpha type-7-A (PAD1) from Arabidopsis thaliana (Mouse-ear cress).